A 196-amino-acid polypeptide reads, in one-letter code: UMP-CMP kinase (196 aa).

13–18 (GAGKGT) is a binding site for ATP. At S33 the chain carries Phosphoserine. The interval 33 to 63 (SAGELLRDERKNPDSQYGELIEKYIKDGKIV) is NMP. A ribonucleoside 5'-phosphate is bound at residue R39. Residues K43 and K55 each carry the N6-acetyllysine modification. Residues 61 to 63 (KIV) and 93 to 96 (GFPR) each bind a ribonucleoside 5'-phosphate. N100 is a binding site for CMP. The residue at position 106 (K106) is an N6-succinyllysine. An LID region spans residues 133–143 (ERGKSSGRSDD). R134 lines the ATP pocket. Positions 140 and 151 each coordinate a ribonucleoside 5'-phosphate. An ATP-binding site is contributed by K179. Position 180 is a phosphoserine (S180).

The protein belongs to the adenylate kinase family. UMP-CMP kinase subfamily. Monomer. It depends on Mg(2+) as a cofactor.

The protein resides in the nucleus. Its subcellular location is the cytoplasm. The enzyme catalyses CMP + ATP = CDP + ADP. The catalysed reaction is dCMP + ATP = dCDP + ADP. It carries out the reaction UMP + ATP = UDP + ADP. It catalyses the reaction a 2'-deoxyribonucleoside 5'-diphosphate + ATP = a 2'-deoxyribonucleoside 5'-triphosphate + ADP. The enzyme catalyses a ribonucleoside 5'-diphosphate + ATP = a ribonucleoside 5'-triphosphate + ADP. Catalyzes the phosphorylation of pyrimidine nucleoside monophosphates at the expense of ATP. Plays an important role in de novo pyrimidine nucleotide biosynthesis. Has preference for UMP and CMP as phosphate acceptors. Also displays broad nucleoside diphosphate kinase activity. The chain is UMP-CMP kinase from Bos taurus (Bovine).